Here is an 845-residue protein sequence, read N- to C-terminus: ATP-binding cassette sub-family F member 1 (845 aa).

The interval 1 to 261 is disordered; the sequence is MPKAPKQQPP…HLSKKEKKKL (261 aa). Residues Ser22 and Ser24 each carry the phosphoserine modification. Positions 29-39 are enriched in basic residues; the sequence is KKGKKDKKIKK. Positions 47-64 are enriched in basic and acidic residues; that stretch reads VEDKQAGEEEKVLKEKEQ. Positions 73-85 are enriched in basic residues; that stretch reads QKKKRDTRKGRRK. Phosphoserine is present on Ser105. Thr108 is modified (phosphothreonine). Phosphoserine; by CK2 occurs at positions 109 and 140. Residues 147-160 show a composition bias toward basic and acidic residues; the sequence is EKHPPKPAKPEKNR. Position 166 is a phosphoserine (Ser166). Residues 206-226 are compositionally biased toward basic and acidic residues; sequence EIIKEKEPPKQGKEKAKKAEQ. The segment covering 227 to 241 has biased composition (acidic residues); the sequence is GSEEEGEGEEEEEEG. The residue at position 228 (Ser228) is a Phosphoserine. Residues 304–548 enclose the ABC transporter 1 domain; the sequence is IKLEKFSISA…MYQQKQKELL (245 aa). 336-343 is an ATP binding site; that stretch reads GPNGKGKT. Over residues 559-580 the composition is skewed to basic and acidic residues; the sequence is KELKAGGKSTKQAEKQTKEALT. A disordered region spans residues 559-602; that stretch reads KELKAGGKSTKQAEKQTKEALTRKQQKCRRKNQDEESQEAPELL. Ser595 is subject to Phosphoserine. The 216-residue stretch at 625-840 folds into the ABC transporter 2 domain; that stretch reads LGLHGVTFGY…VLEALGEVMV (216 aa). An ATP-binding site is contributed by 658-665; it reads GPNGVGKS.

Belongs to the ABC transporter superfamily. ABCF family. EF3 subfamily. As to quaternary structure, isoform 2 interacts (via N-terminus) with EIF2S1; the interaction is independent of its phosphorylated status. Isoform 2 associates (via both ABC transporter domains) with the ribosomes. Isoform 2 is phosphorylated at phosphoserine and phosphothreonine. Isoform 2 phosphorylation on Ser-109 and Ser-140 by CK2 inhibits association of EIF2 with ribosomes. Ubiquitous.

The protein resides in the cytoplasm. It is found in the nucleus. The protein localises to the nucleoplasm. It localises to the nucleus envelope. In terms of biological role, isoform 2 is required for efficient Cap- and IRES-mediated mRNA translation initiation. Isoform 2 is not involved in the ribosome biogenesis. The protein is ATP-binding cassette sub-family F member 1 (ABCF1) of Homo sapiens (Human).